The sequence spans 471 residues: UDP-N-acetylmuramoylalanine--D-glutamate ligase (471 aa).

Gly-135–Thr-141 serves as a coordination point for ATP.

Belongs to the MurCDEF family.

It is found in the cytoplasm. It carries out the reaction UDP-N-acetyl-alpha-D-muramoyl-L-alanine + D-glutamate + ATP = UDP-N-acetyl-alpha-D-muramoyl-L-alanyl-D-glutamate + ADP + phosphate + H(+). It participates in cell wall biogenesis; peptidoglycan biosynthesis. Functionally, cell wall formation. Catalyzes the addition of glutamate to the nucleotide precursor UDP-N-acetylmuramoyl-L-alanine (UMA). In Frankia casuarinae (strain DSM 45818 / CECT 9043 / HFP020203 / CcI3), this protein is UDP-N-acetylmuramoylalanine--D-glutamate ligase.